We begin with the raw amino-acid sequence, 187 residues long: Adenine phosphoribosyltransferase (187 aa).

This sequence belongs to the purine/pyrimidine phosphoribosyltransferase family. Homodimer.

Its subcellular location is the cytoplasm. It catalyses the reaction AMP + diphosphate = 5-phospho-alpha-D-ribose 1-diphosphate + adenine. The protein operates within purine metabolism; AMP biosynthesis via salvage pathway; AMP from adenine: step 1/1. In terms of biological role, catalyzes a salvage reaction resulting in the formation of AMP, that is energically less costly than de novo synthesis. The chain is Adenine phosphoribosyltransferase from Paracoccus denitrificans (strain Pd 1222).